Reading from the N-terminus, the 542-residue chain is MAKQIVYSEASRQAILRGVNQLADAVKVTLGPKGRNVVLEKKFGGPTITKDGVTVAKEIELKDPLENMGAQMVREVASKTSDVAGDGTTTATILAQSIYREGVKAVAAGANPMALKRGIDKAVELATEEVKKLSKPVSGDMIAQVGTISANSDKTIGNIIADAMKKVGKDGVITVEESKTMVTELDTVEGMQFDRGYLSPYFVSDAERMEAVLEDPYILIHEKKISNMKDLLPLLEQIARSGKPLLIIAEEVEGEALATLVVNKLRGTLNACAVKAPGFGDRRKAMLEDIGILTGGKPIMEDIGVKLEGVRLEDLGRAKRVTVDKDNTTIVDGAGNPKGIEGRIKQLRAQIDETTSDYDREKLQERLAKLAGGVAVIKVGAATETEMKEKKARVEDALHATRAAVEEGIVPGGGVALLRAAKALATFKVDGDEQIGVSIVKRACEEPLRQIVSNSGTEGAIVVDKVRENANNNYGYNAATDTYEDLVAAGVIDPTKVTRSALQHAASIAGLMLTTEAMIAEIPEKKSAPAGGPGGHGPEMDY.

Residues 29 to 32 (TLGP), Lys50, 86 to 90 (DGTTT), Gly413, 477 to 479 (NAA), and Asp493 contribute to the ATP site.

The protein belongs to the chaperonin (HSP60) family. As to quaternary structure, forms a cylinder of 14 subunits composed of two heptameric rings stacked back-to-back. Interacts with the co-chaperonin GroES.

Its subcellular location is the cytoplasm. It catalyses the reaction ATP + H2O + a folded polypeptide = ADP + phosphate + an unfolded polypeptide.. Functionally, together with its co-chaperonin GroES, plays an essential role in assisting protein folding. The GroEL-GroES system forms a nano-cage that allows encapsulation of the non-native substrate proteins and provides a physical environment optimized to promote and accelerate protein folding. This is Chaperonin GroEL from Solibacter usitatus (strain Ellin6076).